Reading from the N-terminus, the 391-residue chain is Solute carrier family 35 member F2 (391 aa).

Helical transmembrane passes span 39–59, 73–93, 108–128, 137–157, 165–185, 200–220, 230–250, 267–287, 294–314, and 318–338; these read MLLS…IRLT, LFQS…TLAV, WWKY…VVKA, IQLL…FFLL, FIGA…DVLM, LIGD…SVCQ, VELL…QLAI, LLYV…PVVI, AINL…LFLF, and FSGL…FYFS. Positions 361-391 are disordered; that stretch reads VELPSSGQLEPSVTYTSLSQETEEEPRVRVA. A compositionally biased stretch (polar residues) spans 365–380; the sequence is SSGQLEPSVTYTSLSQ.

Belongs to the SLC35F solute transporter family.

The protein resides in the membrane. In terms of biological role, putative solute transporter. The sequence is that of Solute carrier family 35 member F2 (slc35f2) from Xenopus tropicalis (Western clawed frog).